A 320-amino-acid chain; its full sequence is Peptidase 1 (320 aa).

An N-terminal signal peptide occupies residues 1 to 18 (MKIVLAIASLLALSAVYA). The propeptide at 19–98 (RPSSIKTFEE…LKTQFDLNAE (80 aa)) is activation peptide. Disulfide bonds link Cys102-Cys215, Cys129-Cys169, and Cys163-Cys201. Residue Cys132 is part of the active site. N-linked (GlcNAc...) asparagine glycosylation occurs at Asn150. Residues His268 and Asn288 contribute to the active site.

It belongs to the peptidase C1 family. Post-translationally, N-glycosylated. N-glycanase treatment does not completely remove carbohydrates, suggesting that the protein contains additional glycosylation sites.

Its subcellular location is the secreted. It catalyses the reaction Broad endopeptidase specificity.. In terms of biological role, thiol protease, with a preference for substrates with a large hydrophobic side chain in the P2 position, or with basic residues. This Dermatophagoides pteronyssinus (European house dust mite) protein is Peptidase 1 (DERP1).